The primary structure comprises 328 residues: Ferredoxin--NADP reductase (328 aa).

Residues Ser-14, Glu-33, Gln-41, Tyr-46, Ile-90, and Phe-126 each contribute to the FAD site.

This sequence belongs to the ferredoxin--NADP reductase type 2 family. In terms of assembly, homodimer. FAD is required as a cofactor.

The enzyme catalyses 2 reduced [2Fe-2S]-[ferredoxin] + NADP(+) + H(+) = 2 oxidized [2Fe-2S]-[ferredoxin] + NADPH. In Mycoplasmoides gallisepticum (strain R(low / passage 15 / clone 2)) (Mycoplasma gallisepticum), this protein is Ferredoxin--NADP reductase.